The chain runs to 732 residues: MGKREEMIKEIKELMLQPERIRNMGIAAHIDHGKTTLSDNLLAGAGMISEELAGKQLVLDFDEQEQARGITINAANVSMIHEYGDQKYLVNLIDTPGHVDFGGDVTRAMRAIDGAIIVVDAVEGVMPQTETVLRQALREYVKPVLFINKVDRLIKELKLNPQQMQERFVRVITDVNRLIRKYAPAEFKNKWLVNVNDGSVAFGSAYYNWALSVPYMKKTGVSFKDIIDLTNAGDLKTLRKKAPLHVVVLDMVVRHLPNPVEAQKYRIPHLWRGEIESEIGQSMASCNPKGKMVMVVTKIIIDKHAGEVATGRVWSGTVKTGQEVHIITAKRKARIQQVGIYMGPERINMEAVPAGNIVAVTGLRDAMAGETVAEEPIEPFEALHYTSEPVVTVAIEAKNVKDLPRLIEALRQLAKEDPTLHVKIDEETGQHLLSGMGELHLEVKLVHLKEQWGVDVDVSEPIVVYRESITKQSPIVEGKSPNKHNRFYIVVEPMPDEIYQAIREGEIPEGRPKDTKVVAKKLAELGMDYEIARGIVDIYNGNMFLDNTKGLQYLNEVMDLLVDGFHQAMDEGPLAREPVMKVIVRLVDAKIHEDNVHRGPAQIYPAIRTAIHCAMMKSNPVLYEPYQKVVINVPYEYMGSVSREMNQRRGQLIDMRQEGEVMIIISEAPVAEMFGFAGAIRGATSGRALWSTEHAGFKRVPTELAINIIRQIRQRKGLNPNPPTEKDICPQQ.

The region spanning 19–230 (ERIRNMGIAA…VSFKDIIDLT (212 aa)) is the tr-type G domain. Residues 28–35 (AHIDHGKT), 94–98 (DTPGH), and 148–151 (NKVD) each bind GTP. H597 carries the post-translational modification Diphthamide.

It belongs to the TRAFAC class translation factor GTPase superfamily. Classic translation factor GTPase family. EF-G/EF-2 subfamily.

Its subcellular location is the cytoplasm. Its function is as follows. Catalyzes the GTP-dependent ribosomal translocation step during translation elongation. During this step, the ribosome changes from the pre-translocational (PRE) to the post-translocational (POST) state as the newly formed A-site-bound peptidyl-tRNA and P-site-bound deacylated tRNA move to the P and E sites, respectively. Catalyzes the coordinated movement of the two tRNA molecules, the mRNA and conformational changes in the ribosome. This is Elongation factor 2 from Thermococcus sibiricus (strain DSM 12597 / MM 739).